Here is a 1273-residue protein sequence, read N- to C-terminus: DNA-directed RNA polymerase subunit beta (1273 aa).

The tract at residues 1252–1273 (ADDQDLVVSSNDEEVSENDERS) is disordered.

The protein belongs to the RNA polymerase beta chain family. In terms of assembly, the RNAP catalytic core consists of 2 alpha, 1 beta, 1 beta' and 1 omega subunit. When a sigma factor is associated with the core the holoenzyme is formed, which can initiate transcription.

The enzyme catalyses RNA(n) + a ribonucleoside 5'-triphosphate = RNA(n+1) + diphosphate. In terms of biological role, DNA-dependent RNA polymerase catalyzes the transcription of DNA into RNA using the four ribonucleoside triphosphates as substrates. The chain is DNA-directed RNA polymerase subunit beta from Dehalococcoides mccartyi (strain CBDB1).